Consider the following 960-residue polypeptide: Isoleucine--tRNA ligase (960 aa).

Positions 60-70 (PYANGSLHIGH) match the 'HIGH' region motif. Glutamate 573 contacts L-isoleucyl-5'-AMP. The 'KMSKS' region signature appears at 614–618 (KMSKS). Residue lysine 617 coordinates ATP. Positions 929, 932, 949, and 952 each coordinate Zn(2+).

It belongs to the class-I aminoacyl-tRNA synthetase family. IleS type 1 subfamily. In terms of assembly, monomer. Requires Zn(2+) as cofactor.

It is found in the cytoplasm. It catalyses the reaction tRNA(Ile) + L-isoleucine + ATP = L-isoleucyl-tRNA(Ile) + AMP + diphosphate. In terms of biological role, catalyzes the attachment of isoleucine to tRNA(Ile). As IleRS can inadvertently accommodate and process structurally similar amino acids such as valine, to avoid such errors it has two additional distinct tRNA(Ile)-dependent editing activities. One activity is designated as 'pretransfer' editing and involves the hydrolysis of activated Val-AMP. The other activity is designated 'posttransfer' editing and involves deacylation of mischarged Val-tRNA(Ile). The protein is Isoleucine--tRNA ligase of Nostoc sp. (strain PCC 7120 / SAG 25.82 / UTEX 2576).